Consider the following 176-residue polypeptide: MTTIVSVRRNGHVVIAGDGQATLGNTVMKGNVKKVRRLYNDKVIAGFAGGTADAFTLFELFERKLEMHQGHLVKAAVELAKDWRTDRMLRKLEALLAVADETASLIITGNGDVVQPENDLIAIGSGGPYAQAAARALLENTELGAREIAEKALDIAGDICIYTNHFHTIEELTAKA.

Thr-2 is an active-site residue. The Na(+) site is built by Gly-157, Cys-160, and Thr-163.

The protein belongs to the peptidase T1B family. HslV subfamily. A double ring-shaped homohexamer of HslV is capped on each side by a ring-shaped HslU homohexamer. The assembly of the HslU/HslV complex is dependent on binding of ATP.

The protein localises to the cytoplasm. It carries out the reaction ATP-dependent cleavage of peptide bonds with broad specificity.. Allosterically activated by HslU binding. Functionally, protease subunit of a proteasome-like degradation complex believed to be a general protein degrading machinery. The chain is ATP-dependent protease subunit HslV from Salmonella agona (strain SL483).